Reading from the N-terminus, the 1044-residue chain is Pre-mRNA-splicing factor ATP-dependent RNA helicase DEAH1 (1044 aa).

Residues 106 to 206 (EVVVEKKSSV…TLSKKEKEEA (101 aa)) are disordered. The segment covering 108-121 (VVEKKSSVSESRKS) has biased composition (basic and acidic residues). A compositionally biased stretch (basic residues) spans 122 to 132 (DKGKKRFRKKS). Phosphoserine occurs at positions 135 and 138. A compositionally biased stretch (acidic residues) spans 157–166 (EEDDGSESEE). Residues 167-206 (ERVRDQKEREELEQHLKDRDTARTRKLTEQTLSKKEKEEA) are compositionally biased toward basic and acidic residues. The region spanning 414 to 577 (LKAVEEHQVL…FDTAPIFSFP (164 aa)) is the Helicase ATP-binding domain. ATP is bound at residue 427–434 (GDTGSGKT). The DEAH box signature appears at 524 to 527 (DEAH). The region spanning 600-775 (IVTILTIHVR…SVVLALKSLG (176 aa)) is the Helicase C-terminal domain.

The protein belongs to the DEAD box helicase family. DEAH subfamily. PRP2 sub-subfamily. Widely expressed.

The enzyme catalyses ATP + H2O = ADP + phosphate + H(+). In terms of biological role, involved in pre-mRNA splicing. The protein is Pre-mRNA-splicing factor ATP-dependent RNA helicase DEAH1 of Arabidopsis thaliana (Mouse-ear cress).